The primary structure comprises 189 residues: Elongation factor P (189 aa).

The protein belongs to the elongation factor P family.

The protein resides in the cytoplasm. The protein operates within protein biosynthesis; polypeptide chain elongation. Functionally, involved in peptide bond synthesis. Stimulates efficient translation and peptide-bond synthesis on native or reconstituted 70S ribosomes in vitro. Probably functions indirectly by altering the affinity of the ribosome for aminoacyl-tRNA, thus increasing their reactivity as acceptors for peptidyl transferase. The protein is Elongation factor P of Pseudomonas fluorescens (strain Pf0-1).